The primary structure comprises 343 residues: L-threonine 3-dehydrogenase (343 aa).

Cys-40 serves as a coordination point for Zn(2+). Catalysis depends on charge relay system residues Thr-42 and His-45. Zn(2+) contacts are provided by His-65, Glu-66, Cys-95, Cys-98, Cys-101, and Cys-109. Residues Ile-177, Asp-197, Arg-202, 264 to 266 (LGI), and 288 to 289 (IY) each bind NAD(+).

The protein belongs to the zinc-containing alcohol dehydrogenase family. Homotetramer. The cofactor is Zn(2+).

It localises to the cytoplasm. The catalysed reaction is L-threonine + NAD(+) = (2S)-2-amino-3-oxobutanoate + NADH + H(+). The protein operates within amino-acid degradation; L-threonine degradation via oxydo-reductase pathway; glycine from L-threonine: step 1/2. In terms of biological role, catalyzes the NAD(+)-dependent oxidation of L-threonine to 2-amino-3-ketobutyrate. The protein is L-threonine 3-dehydrogenase of Vibrio parahaemolyticus serotype O3:K6 (strain RIMD 2210633).